The following is a 349-amino-acid chain: Hydroxymethylglutaryl-CoA synthase (349 aa).

The (3S)-3-hydroxy-3-methylglutaryl-CoA site is built by aspartate 30 and alanine 31. Glutamate 82 serves as the catalytic Proton donor/acceptor. (3S)-3-hydroxy-3-methylglutaryl-CoA contacts are provided by cysteine 114 and threonine 155. Catalysis depends on cysteine 114, which acts as the Acyl-thioester intermediate. A CoA-binding site is contributed by arginine 203. Positions 205 and 238 each coordinate (3S)-3-hydroxy-3-methylglutaryl-CoA. Histidine 238 (proton donor/acceptor) is an active-site residue. A CoA-binding site is contributed by lysine 243. (3S)-3-hydroxy-3-methylglutaryl-CoA is bound by residues asparagine 270 and serine 300.

Belongs to the thiolase-like superfamily. Archaeal HMG-CoA synthase family. In terms of assembly, interacts with acetoacetyl-CoA thiolase that catalyzes the precedent step in the pathway and with a DUF35 protein. The acetoacetyl-CoA thiolase/HMG-CoA synthase complex channels the intermediate via a fused CoA-binding site, which allows for efficient coupling of the endergonic thiolase reaction with the exergonic HMGCS reaction.

The enzyme catalyses acetoacetyl-CoA + acetyl-CoA + H2O = (3S)-3-hydroxy-3-methylglutaryl-CoA + CoA + H(+). It functions in the pathway metabolic intermediate biosynthesis; (R)-mevalonate biosynthesis; (R)-mevalonate from acetyl-CoA: step 2/3. Catalyzes the condensation of acetyl-CoA with acetoacetyl-CoA to form 3-hydroxy-3-methylglutaryl-CoA (HMG-CoA). Functions in the mevalonate (MVA) pathway leading to isopentenyl diphosphate (IPP), a key precursor for the biosynthesis of isoprenoid compounds that are building blocks of archaeal membrane lipids. In Methanococcus vannielii (strain ATCC 35089 / DSM 1224 / JCM 13029 / OCM 148 / SB), this protein is Hydroxymethylglutaryl-CoA synthase.